The primary structure comprises 547 residues: Solute carrier family 22 member 7 (547 aa).

The chain crosses the membrane as a helical span at residues 21 to 41; the sequence is VALLALPRVLLPMHFLLPIFL. Over residues 91–103 the composition is skewed to polar residues; it reads NSTLWGEGQNSGE. Positions 91–112 are disordered; it reads NSTLWGEGQNSGEQPEGEPSTV. 11 consecutive transmembrane segments (helical) span residues 145–165, 179–199, 203–223, 233–253, 258–278, 345–365, 367–387, 403–423, 431–451, 465–485, and 492–512; these read AISTFFFAGVLVGAEVYGYLS, VSSLALGLASAASVSYIMFAI, LTGMALAGFTIIVMPLELEWL, VLSSTFWTGGVMLLALIGYLI, WLLLTVTLPCVPGILTLWWVP, ISLCCMVVWFGVNFSYYGVSL, LSGLGLNVYLTQLVFGAVELP, LTMAGTLLGAALAVGLRILVS, TALAVMGKAFSEAAFTTAYLF, MGLTALVGRLGGSLAPLAALL, and LPKLAYGGIALLAACTALLLP. A disordered region spans residues 521–547; that stretch reads ETIQDVERKSAPSSLQEEEMPMKQVQD.

Belongs to the major facilitator (TC 2.A.1) superfamily. Organic cation transporter (TC 2.A.1.19) family.

Its subcellular location is the basolateral cell membrane. The protein localises to the apical cell membrane. It localises to the cell membrane. The catalysed reaction is orotate(out) + L-glutamate(in) = orotate(in) + L-glutamate(out). The enzyme catalyses 3',5'-cyclic GMP(in) = 3',5'-cyclic GMP(out). It carries out the reaction GMP(in) = GMP(out). It catalyses the reaction 2'-deoxyguanosine(in) = 2'-deoxyguanosine(out). The catalysed reaction is GDP(in) = GDP(out). The enzyme catalyses guanosine(in) = guanosine(out). It carries out the reaction GTP(in) = GTP(out). It catalyses the reaction 3',5'-cyclic AMP(in) = 3',5'-cyclic AMP(out). The catalysed reaction is creatinine(in) = creatinine(out). The enzyme catalyses prostaglandin E2(out) = prostaglandin E2(in). It carries out the reaction 2-oxoglutarate(in) = 2-oxoglutarate(out). It catalyses the reaction glutarate(in) = glutarate(out). The catalysed reaction is urate(out) = urate(in). The enzyme catalyses estrone 3-sulfate(out) = estrone 3-sulfate(in). Functions as a Na(+)-independent bidirectional multispecific transporter. Contributes to the renal and hepatic elimination of endogenous organic compounds from the systemic circulation into the urine and bile, respectively. Capable of transporting a wide range of purine and pyrimidine nucleobases, nucleosides and nucleotides, with cGMP, 2'deoxyguanosine and GMP being the preferred substrates. Functions as a pH- and chloride-independent cGMP bidirectional facilitative transporter that can regulate both intracellular and extracellular levels of cGMP and may be involved in cGMP signaling pathways. Mediates orotate/glutamate bidirectional exchange and most likely display a physiological role in hepatic release of glutamate into the blood. Involved in renal secretion and possible reabsorption of creatinine. Able to uptake prostaglandin E2 (PGE2) and may contribute to PGE2 renal excretion. Also transports alpha-ketoglutarate and urate. Apart from the orotate/glutamate exchange, the counterions for the uptake of other SLC22A7/OAT2 substrates remain to be identified. This chain is Solute carrier family 22 member 7 (SLC22A7), found in Bos taurus (Bovine).